The primary structure comprises 245 residues: Thiopurine S-methyltransferase (245 aa).

Residue S14 is modified to Phosphoserine. Residue 29 to 40 participates in S-adenosyl-L-methionine binding; it reads WQDKWVNGKTAF. Position 40 (F40) interacts with substrate. An N6-acetyllysine modification is found at K58. S-adenosyl-L-methionine contacts are provided by residues L69, E90, 134–135, and R152; that span reads SI.

It belongs to the class I-like SAM-binding methyltransferase superfamily. TPMT family. As to quaternary structure, monomer.

It is found in the cytoplasm. The catalysed reaction is S-adenosyl-L-methionine + a thiopurine = S-adenosyl-L-homocysteine + a thiopurine S-methylether.. It catalyses the reaction mercaptopurine + S-adenosyl-L-methionine = 6-methylthiopurine + S-adenosyl-L-homocysteine + H(+). The enzyme catalyses 6-thioguanine + S-adenosyl-L-methionine = 6-methylthioguanine + S-adenosyl-L-homocysteine + H(+). Its activity is regulated as follows. Inhibited by S-adenosyl-L-homocysteine (SAH). Its function is as follows. Catalyzes the S-methylation of thiopurine drugs such as 6-mercaptopurine (also called mercaptopurine, 6-MP or its brand name Purinethol) and 6-thioguanine (also called tioguanine or 6-TG) using S-adenosyl-L-methionine as the methyl donor. TPMT activity modulates the cytotoxic effects of thiopurine prodrugs. A natural substrate for this enzyme has yet to be identified. The protein is Thiopurine S-methyltransferase (TPMT) of Homo sapiens (Human).